The following is a 308-amino-acid chain: Extended-spectrum beta-lactamase PER-1 (308 aa).

An N-terminal signal peptide occupies residues 1–26 (MNVIIKAVVTASTLLMVSFSSFETSA). The active-site Nucleophile; acyl-ester intermediate is the Ser-71. The a beta-lactam site is built by Lys-74, Ser-135, and Glu-171.

Belongs to the class-A beta-lactamase family. In terms of assembly, monomer.

Its subcellular location is the secreted. It catalyses the reaction a beta-lactam + H2O = a substituted beta-amino acid. Its activity is regulated as follows. Inhibited by the beta-lactamase-blocking agents clavulanic acid, tazobactam and sulbactam. Not inhibited by EDTA. In terms of biological role, extended-spectrum beta-lactamase (ESBL) which confers resistance to penicillins, as well as first-, second- and third-generation cephalosporins, but not the carbapenem, imipenem, in the JM109 strain of E.coli. Has cefotaxime-hydrolyzing activity. This Pseudomonas aeruginosa protein is Extended-spectrum beta-lactamase PER-1.